Reading from the N-terminus, the 51-residue chain is ATP synthase F(1) complex subunit epsilon, mitochondrial (51 aa).

An N6-acetyllysine; alternate mark is found at K21, K32, and K37. Residues K21, K32, and K37 each carry the N6-succinyllysine; alternate modification. An N6-acetyllysine modification is found at K44.

This sequence belongs to the eukaryotic ATPase epsilon family. As to quaternary structure, component of the ATP synthase complex composed at least of ATP5F1A/subunit alpha, ATP5F1B/subunit beta, ATP5MC1/subunit c (homooctomer), MT-ATP6/subunit a, MT-ATP8/subunit 8, ATP5ME/subunit e, ATP5MF/subunit f, ATP5MG/subunit g, ATP5MK/subunit k, ATP5MJ/subunit j, ATP5F1C/subunit gamma, ATP5F1D/subunit delta, ATP5F1E/subunit epsilon, ATP5PF/subunit F6, ATP5PB/subunit b, ATP5PD/subunit d, ATP5PO/subunit OSCP. ATP synthase complex consists of a soluble F(1) head domain (subunits alpha(3) and beta(3)) - the catalytic core - and a membrane F(0) domain - the membrane proton channel (subunits c, a, 8, e, f, g, k and j). These two domains are linked by a central stalk (subunits gamma, delta, and epsilon) rotating inside the F1 region and a stationary peripheral stalk (subunits F6, b, d, and OSCP).

The protein resides in the mitochondrion. Its subcellular location is the mitochondrion inner membrane. Functionally, subunit epsilon, of the mitochondrial membrane ATP synthase complex (F(1)F(0) ATP synthase or Complex V) that produces ATP from ADP in the presence of a proton gradient across the membrane which is generated by electron transport complexes of the respiratory chain. ATP synthase complex consist of a soluble F(1) head domain - the catalytic core - and a membrane F(1) domain - the membrane proton channel. These two domains are linked by a central stalk rotating inside the F(1) region and a stationary peripheral stalk. During catalysis, ATP synthesis in the catalytic domain of F(1) is coupled via a rotary mechanism of the central stalk subunits to proton translocation. In vivo, can only synthesize ATP although its ATP hydrolase activity can be activated artificially in vitro. May be essential for the assembly of F(1) and may play an important role in the incorporation of the hydrophobic subunit c into the F(1)-c oligomer rotor of the mitochondrial ATP synthase complex. This is ATP synthase F(1) complex subunit epsilon, mitochondrial from Rattus norvegicus (Rat).